The chain runs to 454 residues: Kynurenine--oxoglutarate transaminase 3 (454 aa).

The residue at position 2 (Phe-2) is an N-acetylserine. A substrate-binding site is contributed by Gly-71. Lys-116 bears the N6-acetyllysine; alternate mark. Lys-116 is subject to N6-succinyllysine; alternate. Position 218 (Asn-218) interacts with substrate. An N6-(pyridoxal phosphate)lysine modification is found at Lys-280. A substrate-binding site is contributed by Arg-429.

It belongs to the class-I pyridoxal-phosphate-dependent aminotransferase family. In terms of assembly, homodimer. Requires pyridoxal 5'-phosphate as cofactor.

The catalysed reaction is L-kynurenine + 2-oxoglutarate = kynurenate + L-glutamate + H2O. The enzyme catalyses L-kynurenine + glyoxylate = kynurenate + glycine + H2O. It carries out the reaction 3-hydroxy-L-kynurenine + glyoxylate = xanthurenate + glycine + H2O. It catalyses the reaction an S-substituted L-cysteine + H2O = a thiol + pyruvate + NH4(+). It functions in the pathway amino-acid degradation; L-kynurenine degradation; kynurenate from L-kynurenine: step 1/2. Functionally, catalyzes the irreversible transamination of the L-tryptophan metabolite L-kynurenine to form kynurenic acid (KA), an intermediate in the tryptophan catabolic pathway which is also a broad spectrum antagonist of the three ionotropic excitatory amino acid receptors among others. May catalyze the beta-elimination of S-conjugates and Se-conjugates of L-(seleno)cysteine, resulting in the cleavage of the C-S or C-Se bond. Has transaminase activity towards L-kynurenine, tryptophan, phenylalanine, serine, cysteine, methionine, histidine, glutamine and asparagine with glyoxylate as an amino group acceptor (in vitro). Has lower activity with 2-oxoglutarate as amino group acceptor (in vitro). The sequence is that of Kynurenine--oxoglutarate transaminase 3 from Homo sapiens (Human).